The following is a 308-amino-acid chain: Mitochondrial brown fat uncoupling protein 1 (308 aa).

The Mitochondrial intermembrane segment spans residues 1–10 (MVASAEADVP). The helical transmembrane segment at 11–33 (PPTMLVKIASAGLSACLADIITF) threads the bilayer. 3 Solcar repeats span residues 11–103 (PPTM…VQEY), 112–202 (ATLG…LKEA), and 211–296 (DDIP…LKKE). Residues 34 to 74 (PLDTAKVRLQVQGERPNAPGVKYKGVLGTIATVAKTEGPLK) are Mitochondrial matrix-facing. Lysine 57 contacts fatty acid 16:0. The helical transmembrane segment at 75-97 (LYGGLPAGIQRQISFASLRIGLY) threads the bilayer. Topologically, residues 98–117 (DTVQEYFNAHRKTPATLGNK) are mitochondrial intermembrane. The helical transmembrane segment at 118–134 (ISAGLMTGCVTVFIGQP) threads the bilayer. Residues 135–179 (TEVAKVRMQAQSSLHWLKPRYSGTYNAYYVIVKTEGFLGLWKGTS) are Mitochondrial matrix-facing. Residues 180 to 196 (LNLTRNVIINCTELVVY) form a helical membrane-spanning segment. The Mitochondrial intermembrane portion of the chain corresponds to 197–213 (DVLKEALVKNNVLADDI). The chain crosses the membrane as a helical span at residues 214–233 (PCHLLAALTAGFCTTALASP). Residues 234-267 (VDVVKTRFINSPPGYYPHVHNCALNMLQKEGLRA) lie on the Mitochondrial matrix side of the membrane. Cysteine 255 is subject to Cysteine sulfenic acid (-SOH). A helical transmembrane segment spans residues 268–290 (FFKGFVPSFLRLGSWTVIMHVTF). Lysine 270 is a fatty acid 16:0 binding site. The Mitochondrial intermembrane segment spans residues 291 to 308 (EQLKKELMKSRQTVDCAT).

It belongs to the mitochondrial carrier (TC 2.A.29) family. Most probably functions as a monomer. Binds one purine nucleotide per monomer. However, has also been suggested to function as a homodimer or a homotetramer. Tightly associates with cardiolipin in the mitochondrion inner membrane; may stabilize and regulate its activity. Post-translationally, may undergo sulfenylation upon cold exposure. May increase the sensitivity of UCP1 thermogenic function to the activation by noradrenaline probably through structural effects. May undergo ubiquitin-mediated proteasomal degradation. Brown adipose tissue.

The protein localises to the mitochondrion inner membrane. It carries out the reaction H(+)(in) = H(+)(out). Its activity is regulated as follows. Has no constitutive proton transporter activity and has to be activated by long-chain fatty acids/LCFAs. Inhibited by purine nucleotides. Both purine nucleotides and LCFAs bind the cytosolic side of the transporter and directly compete to activate or inhibit it. Activated by noradrenaline and reactive oxygen species. Despite lacking canonical translational encoding for selenocysteine, a small pool of the protein has been observed to selectively incorporate selenocysteine at 'Cys-255'. Selenocysteine-modified protein is highly sensitive to redox modification and may constitute a pool of protein highly sensitive to activation by elevated levels of reactive oxygen species (ROS). Functionally, mitochondrial protein responsible for thermogenic respiration, a specialized capacity of brown adipose tissue and beige fat that participates in non-shivering adaptive thermogenesis to temperature and diet variations and more generally to the regulation of energy balance. Functions as a long-chain fatty acid/LCFA and proton symporter, simultaneously transporting one LCFA and one proton through the inner mitochondrial membrane. However, LCFAs remaining associated with the transporter via their hydrophobic tails, it results in an apparent transport of protons activated by LCFAs. Thereby, dissipates the mitochondrial proton gradient and converts the energy of substrate oxydation into heat instead of ATP. Regulates the production of reactive oxygen species/ROS by mitochondria. The sequence is that of Mitochondrial brown fat uncoupling protein 1 from Suncus murinus (Asian house shrew).